Consider the following 60-residue polypeptide: Large ribosomal subunit protein uL30 (60 aa).

Belongs to the universal ribosomal protein uL30 family. In terms of assembly, part of the 50S ribosomal subunit.

This Carboxydothermus hydrogenoformans (strain ATCC BAA-161 / DSM 6008 / Z-2901) protein is Large ribosomal subunit protein uL30.